The chain runs to 404 residues: S-adenosylmethionine synthase (404 aa).

A compositionally biased stretch (polar residues) spans 1-13; it reads MSHSRYFFTSESV. The tract at residues 1–20 is disordered; it reads MSHSRYFFTSESVSEGHPDK. An ATP-binding site is contributed by histidine 17. Aspartate 19 serves as a coordination point for Mg(2+). Glutamate 45 lines the K(+) pocket. The L-methionine site is built by glutamate 58 and glutamine 101. Residues 101–111 form a flexible loop region; sequence QSPDINRGVDR. ATP-binding positions include 172-174, 246-247, aspartate 255, 261-262, alanine 278, and lysine 282; these read DSK, RF, and RK. Aspartate 255 contributes to the L-methionine binding site. Lysine 286 contributes to the L-methionine binding site.

The protein belongs to the AdoMet synthase family. As to quaternary structure, homotetramer; dimer of dimers. Requires Mg(2+) as cofactor. It depends on K(+) as a cofactor.

Its subcellular location is the cytoplasm. It catalyses the reaction L-methionine + ATP + H2O = S-adenosyl-L-methionine + phosphate + diphosphate. Its pathway is amino-acid biosynthesis; S-adenosyl-L-methionine biosynthesis; S-adenosyl-L-methionine from L-methionine: step 1/1. Its function is as follows. Catalyzes the formation of S-adenosylmethionine (AdoMet) from methionine and ATP. The overall synthetic reaction is composed of two sequential steps, AdoMet formation and the subsequent tripolyphosphate hydrolysis which occurs prior to release of AdoMet from the enzyme. The sequence is that of S-adenosylmethionine synthase from Chlorobaculum parvum (strain DSM 263 / NCIMB 8327) (Chlorobium vibrioforme subsp. thiosulfatophilum).